The sequence spans 85 residues: UPF0386 protein Meso_1721 (85 aa).

This sequence belongs to the UPF0386 family.

This is UPF0386 protein Meso_1721 from Chelativorans sp. (strain BNC1).